The primary structure comprises 445 residues: Methylenetetrahydrofolate--tRNA-(uracil-5-)-methyltransferase TrmFO (445 aa).

9-14 (GGGLAG) serves as a coordination point for FAD.

It belongs to the MnmG family. TrmFO subfamily. Requires FAD as cofactor.

It is found in the cytoplasm. The catalysed reaction is uridine(54) in tRNA + (6R)-5,10-methylene-5,6,7,8-tetrahydrofolate + NADH + H(+) = 5-methyluridine(54) in tRNA + (6S)-5,6,7,8-tetrahydrofolate + NAD(+). It catalyses the reaction uridine(54) in tRNA + (6R)-5,10-methylene-5,6,7,8-tetrahydrofolate + NADPH + H(+) = 5-methyluridine(54) in tRNA + (6S)-5,6,7,8-tetrahydrofolate + NADP(+). Its function is as follows. Catalyzes the folate-dependent formation of 5-methyl-uridine at position 54 (M-5-U54) in all tRNAs. The protein is Methylenetetrahydrofolate--tRNA-(uracil-5-)-methyltransferase TrmFO of Rhizorhabdus wittichii (strain DSM 6014 / CCUG 31198 / JCM 15750 / NBRC 105917 / EY 4224 / RW1) (Sphingomonas wittichii).